Consider the following 151-residue polypeptide: Small ribosomal subunit protein uS15 (151 aa).

The tract at residues 1-20 is disordered; the sequence is MARLHSGKRGSSGSTRPLRT.

It belongs to the universal ribosomal protein uS15 family. In terms of assembly, part of the 30S ribosomal subunit.

The polypeptide is Small ribosomal subunit protein uS15 (Methanococcus maripaludis (strain C5 / ATCC BAA-1333)).